Consider the following 349-residue polypeptide: Phosphoribosylformylglycinamidine cyclo-ligase (349 aa).

It belongs to the AIR synthase family.

Its subcellular location is the cytoplasm. The catalysed reaction is 2-formamido-N(1)-(5-O-phospho-beta-D-ribosyl)acetamidine + ATP = 5-amino-1-(5-phospho-beta-D-ribosyl)imidazole + ADP + phosphate + H(+). The protein operates within purine metabolism; IMP biosynthesis via de novo pathway; 5-amino-1-(5-phospho-D-ribosyl)imidazole from N(2)-formyl-N(1)-(5-phospho-D-ribosyl)glycinamide: step 2/2. In Jannaschia sp. (strain CCS1), this protein is Phosphoribosylformylglycinamidine cyclo-ligase.